Consider the following 446-residue polypeptide: Glucose transporter GlcP (446 aa).

Over M1–Y6 the chain is Cytoplasmic. The chain crosses the membrane as a helical span at residues L7–L31. Residues F32–P38 lie on the Extracellular side of the membrane. A helical membrane pass occupies residues L39–P64. Over L65–G70 the chain is Cytoplasmic. A helical transmembrane segment spans residues R71 to A90. Residues A91–N94 lie on the Extracellular side of the membrane. The chain crosses the membrane as a helical span at residues L95–E122. The Cytoplasmic portion of the chain corresponds to M123 to R129. The helical transmembrane segment at G130–Y152 threads the bilayer. The Extracellular segment spans residues A153 to F154. A helical transmembrane segment spans residues A155–F180. Topologically, residues M181–P234 are cytoplasmic. Residues W235–A269 traverse the membrane as a helical segment. The Extracellular portion of the chain corresponds to G270 to G272. The chain crosses the membrane as a helical span at residues E273 to I295. At F296–R303 the chain is on the cytoplasmic side. Residues K304–L324 form a helical membrane-spanning segment. Over I325–G329 the chain is Extracellular. The helical transmembrane segment at I330 to L363 threads the bilayer. Residues F364–G370 are Cytoplasmic-facing. The helical transmembrane segment at A371–S399 threads the bilayer. Over T400–E401 the chain is Extracellular. Residues W402–K420 traverse the membrane as a helical segment. The Cytoplasmic segment spans residues F421–E446.

It belongs to the major facilitator superfamily. Sugar transporter (TC 2.A.1.1) family.

The protein localises to the cell membrane. Inhibited by carbonyl cyanide m-chlorophenylhydrazone (CCCP) and by the human glucose transport inhibitors cytochalasin B, phloretin, and forskolin. Functionally, transporter highly specific for glucose uptake. The chain is Glucose transporter GlcP from Staphylococcus epidermidis (strain ATCC 12228 / FDA PCI 1200).